The following is a 182-amino-acid chain: Large ribosomal subunit protein uL22 (182 aa).

The disordered stretch occupies residues 155–182; sequence SGVDGAKQGKKKKKTDGVEKATTKRQKQ.

It belongs to the universal ribosomal protein uL22 family.

In Carabus granulatus (Ground beetle), this protein is Large ribosomal subunit protein uL22 (RpL17).